Here is a 924-residue protein sequence, read N- to C-terminus: Intercellular adhesion molecule 5 (924 aa).

Residues methionine 1–glutamine 31 form the signal peptide. Residues glutamate 32–tryptophan 835 are Extracellular-facing. Ig-like C2-type domains are found at residues glycine 48–proline 130, glycine 135–alanine 235, glycine 242–leucine 329, glycine 337–leucine 402, proline 408–threonine 486, proline 491–threonine 568, proline 573–alanine 662, proline 666–threonine 739, and proline 746–arginine 830. A glycan (N-linked (GlcNAc...) (high mannose) asparagine) is linked at asparagine 54. 2 cysteine pairs are disulfide-bonded: cysteine 55–cysteine 99 and cysteine 59–cysteine 103. N-linked (GlcNAc...) asparagine glycosylation is found at asparagine 74 and asparagine 137. Cysteines 142 and 198 form a disulfide. 2 positions are modified to phosphothreonine: threonine 182 and threonine 184. Residues asparagine 195 and asparagine 214 are each glycosylated (N-linked (GlcNAc...) asparagine). Cysteine 249 and cysteine 302 are disulfide-bonded. 4 N-linked (GlcNAc...) asparagine glycosylation sites follow: asparagine 303, asparagine 316, asparagine 371, and asparagine 397. Cysteine 344 and cysteine 383 form a disulfide bridge. 3 disulfides stabilise this stretch: cysteine 415–cysteine 470, cysteine 498–cysteine 552, and cysteine 580–cysteine 645. Asparagine 583 and asparagine 646 each carry an N-linked (GlcNAc...) asparagine glycan. Cysteine 673 and cysteine 725 are oxidised to a cystine. Asparagine 764, asparagine 795, and asparagine 796 each carry an N-linked (GlcNAc...) asparagine glycan. A disulfide bridge connects residues cysteine 769 and cysteine 814. A helical transmembrane segment spans residues leucine 836–leucine 856. The Cytoplasmic segment spans residues alanine 857–alanine 924. Residues alanine 891–alanine 903 show a composition bias toward gly residues. A disordered region spans residues alanine 891 to proline 911.

It belongs to the immunoglobulin superfamily. ICAM family. Glycosylation at Asn-54 is critical for functional folding. Expressed on neurons in the most rostral segment of the mammalian brain, the telencephalon.

It is found in the membrane. Functionally, ICAM proteins are ligands for the leukocyte adhesion protein LFA-1 (integrin alpha-L/beta-2). This chain is Intercellular adhesion molecule 5 (ICAM5), found in Homo sapiens (Human).